A 34-amino-acid chain; its full sequence is Photosystem II reaction center protein M (34 aa).

The chain crosses the membrane as a helical span at residues 5-25; that stretch reads ILAFIATALFILVPTAFLLII.

This sequence belongs to the PsbM family. In terms of assembly, PSII is composed of 1 copy each of membrane proteins PsbA, PsbB, PsbC, PsbD, PsbE, PsbF, PsbH, PsbI, PsbJ, PsbK, PsbL, PsbM, PsbT, PsbX, PsbY, PsbZ, Psb30/Ycf12, at least 3 peripheral proteins of the oxygen-evolving complex and a large number of cofactors. It forms dimeric complexes.

It is found in the plastid. Its subcellular location is the chloroplast thylakoid membrane. Its function is as follows. One of the components of the core complex of photosystem II (PSII). PSII is a light-driven water:plastoquinone oxidoreductase that uses light energy to abstract electrons from H(2)O, generating O(2) and a proton gradient subsequently used for ATP formation. It consists of a core antenna complex that captures photons, and an electron transfer chain that converts photonic excitation into a charge separation. This subunit is found at the monomer-monomer interface. The polypeptide is Photosystem II reaction center protein M (Coffea arabica (Arabian coffee)).